Reading from the N-terminus, the 191-residue chain is Signal peptidase complex catalytic subunit sec11 (191 aa).

Topologically, residues 1 to 18 (MLSFLSSNLSNVRQSLAQ) are cytoplasmic. Residues 19-39 (VLNFALVLSTAFMMWKGLSVF) form a helical; Signal-anchor for type II membrane protein membrane-spanning segment. The Lumenal portion of the chain corresponds to 40 to 191 (TASSSPVVVV…MGLMVMLQRE (152 aa)). Catalysis depends on charge relay system residues Ser-53, His-92, and Asp-133. Residues 177-188 (ALLGIMGLMVML) are C-terminal short (CTS) helix.

The protein belongs to the peptidase S26B family. In terms of assembly, component of the signal peptidase complex (SPC) composed of a catalytic subunit SEC11 and three accessory subunits SPC1, SPC2 and SPC3. The complex induces a local thinning of the ER membrane which is used to measure the length of the signal peptide (SP) h-region of protein substrates. This ensures the selectivity of the complex towards h-regions shorter than 18-20 amino acids. SPC associates with the translocon complex.

The protein localises to the endoplasmic reticulum membrane. It catalyses the reaction Cleavage of hydrophobic, N-terminal signal or leader sequences from secreted and periplasmic proteins.. Catalytic component of the signal peptidase complex (SPC) which catalyzes the cleavage of N-terminal signal sequences from nascent proteins as they are translocated into the lumen of the endoplasmic reticulum. Specifically cleaves N-terminal signal peptides that contain a hydrophobic alpha-helix (h-region) shorter than 18-20 amino acids. The chain is Signal peptidase complex catalytic subunit sec11 (sec11) from Aspergillus oryzae (strain ATCC 42149 / RIB 40) (Yellow koji mold).